An 843-amino-acid chain; its full sequence is MSIQEKSKENSSIVTKESEDENLEEEVESSQNSPTKKSGSKEAVKTPVRFSNKSKTNESEFGMRMSTRSASCSADKTATNSFNKNTVTLKGQSQESSKTKKLCQEKLSLGILKGNEQLHRRSQRLQQLTECTTRSLRSREIHGQIQTVKQNQQSARREQCNSTQSKCNKVKVNQKHVKRKVLEIKSDCKEDRHSVTNEVINSPKGKKRKVQHQTTSTCSSQCNQGSEKCLQKTSRKEEIKPVPVTADIRKLKAATSVVSKKNELRKSAHTQVSTSTKRPQIPLPLVPEHSDDQELEQAGKSKRGSILQLCEEIAGEIESDTVEVKKESSCVESVKEEKPAEVKLQGTDAERQILHHKEANQDVRSNRFFPSRKTKPVKCVLNGINSSTKKNSNWTKIKLSKFNSVQQHKLDSQVSPKLNLLQTGLSTSVLEMPHPVSQSTFLEMKAHGNVTCQRDKMKGIKSEEVKINNIAIEINKATKRDPGNCNLDNHIKPSPDSSLDNQMKLSCESAPDQNFSICSASEVETNPLENTAAASTLLSQAKIDEDRTFPGSAPNQQHSVLSDEASINRKNRDVPPNHSQLKHDSHLEITIPKSLKLKDSEKVDEKQLVIDAGHKRFGAVSCNICGMLYTASNPEDETQHLLFHNQFISAVKYVGWKKERILAEYPDGRIIMVLPEDPKYALKKVDEIREMVDNDLGFQQAPLMCYSRTKTLLFISNDKKVVGCLIAEHIQWGYRVIEEKLPVIRSEEEKVRFERQKAWCCSTLPEPAICGISRIWVFSMMRRKKIASRMIECLRSNFIYGSYLSKEEIAFSDPTPDGKLFATQYCGTGQFLVYNFINGQNTT.

The disordered stretch occupies residues 1–78 (MSIQEKSKEN…SASCSADKTA (78 aa)). The segment covering 18–28 (SEDENLEEEVE) has biased composition (acidic residues). Residues 66–78 (STRSASCSADKTA) are compositionally biased toward polar residues. S202 carries the phosphoserine modification. Positions 262-300 (NELRKSAHTQVSTSTKRPQIPLPLVPEHSDDQELEQAGK) are disordered. Over residues 269 to 278 (HTQVSTSTKR) the composition is skewed to polar residues. K335 is covalently cross-linked (Glycyl lysine isopeptide (Lys-Gly) (interchain with G-Cter in SUMO2)). S415 is modified (phosphoserine). Positions 546–584 (DRTFPGSAPNQQHSVLSDEASINRKNRDVPPNHSQLKHD) are disordered. Residues 566 to 584 (SINRKNRDVPPNHSQLKHD) are compositionally biased toward basic and acidic residues. The segment at 620–644 (VSCNICGMLYTASNPEDETQHLLFH) adopts a CCHH-type zinc-finger fold. Acetyl-CoA-binding positions include 775–777 (IWV), 783–788 (RKKIAS), and 815–817 (TPD).

The protein belongs to the acetyltransferase family. ECO subfamily. As to quaternary structure, the subunit structure is controversial. Monomer. Homodimer. In terms of processing, phosphorylated during mitosis.

Its subcellular location is the nucleus. The protein resides in the chromosome. The catalysed reaction is L-lysyl-[protein] + acetyl-CoA = N(6)-acetyl-L-lysyl-[protein] + CoA + H(+). Its function is as follows. Acetyltransferase required for the establishment of sister chromatid cohesion. Couples the processes of cohesion and DNA replication to ensure that only sister chromatids become paired together. In contrast to the structural cohesins, the deposition and establishment factors are required only during S phase. Acts by mediating the acetylation of cohesin component SMC3. This chain is N-acetyltransferase ESCO1 (Esco1), found in Mus musculus (Mouse).